The sequence spans 292 residues: Zinc finger protein OZF (292 aa).

10 consecutive C2H2-type zinc fingers follow at residues 16–38, 44–66, 72–94, 100–122, 128–150, 156–178, 184–206, 212–234, 240–262, and 268–290; these read FACKVCGKLFSHKSNLTEHEHFH, FECNECGKAFSQKQYVIKHQSTH, FECSDCGKAFSQKENLLTHQKIH, FECKDCGKAFIQKSNLIRHQRTH, FICKECGKTFSGKSNLTEHEKIH, FKCNECGTAFGQKKYLIKHQNIH, YECNECGKAFSQRTSLIVHVRIH, YECNVCGKAFSQSSSLTVHVRSH, YGCNECGKAFSQFSTLALHLRIH, and YQCSECGKAFSQKSHHIRHQKIH. Residues K28, K51, and K56 each participate in a glycyl lysine isopeptide (Lys-Gly) (interchain with G-Cter in SUMO2) cross-link. Glycyl lysine isopeptide (Lys-Gly) (interchain with G-Cter in SUMO) cross-links involve residues K157 and K169. K173 participates in a covalent cross-link: Glycyl lysine isopeptide (Lys-Gly) (interchain with G-Cter in SUMO2). The interval 212–292 is interaction with TERF2IP; it reads YECNVCGKAF…HIRHQKIHTH (81 aa).

Belongs to the krueppel C2H2-type zinc-finger protein family. Binds DNA. Interacts with SUMO conjugating enzyme UBC9/UBE2I. Interacts with the telomeric protein TERF2IP. In terms of tissue distribution, expressed in heart, brain, liver, lung, skeletal muscle and kidney, and at much lower level in spleen and testicle. Expressed in lactating mammary gland.

Its subcellular location is the nucleus. This Mus musculus (Mouse) protein is Zinc finger protein OZF (Znf146).